The chain runs to 298 residues: Probable prolyl 4-hydroxylase 4 (298 aa).

The Cytoplasmic segment spans residues 1-6 (MARRGL). Residues 7–25 (LISFFAIFSVLLQSSTSLI) traverse the membrane as a helical; Signal-anchor for type II membrane protein segment. The Lumenal portion of the chain corresponds to 26-298 (SSSSVFVNPS…GYCRRSCKAC (273 aa)). The N-linked (GlcNAc...) asparagine glycan is linked to N77. The region spanning 120–245 (NGEDIQVLRY…KWSATKWIHV (126 aa)) is the Fe2OG dioxygenase domain. Fe cation-binding residues include H138 and D140. N-linked (GlcNAc...) asparagine glycosylation occurs at N164. H226 is a Fe cation binding site. Residue K236 coordinates 2-oxoglutarate. 2 N-linked (GlcNAc...) asparagine glycosylation sites follow: N257 and N262. The ShKT domain occupies 258–298 (CTDMNESCERWAVLGECTKNPEYMVGTTELPGYCRRSCKAC). 3 disulfide bridges follow: C258-C298, C265-C291, and C274-C295.

This sequence belongs to the P4HA family. Fe(2+) is required as a cofactor. Requires L-ascorbate as cofactor.

It is found in the endoplasmic reticulum membrane. The catalysed reaction is L-prolyl-[collagen] + 2-oxoglutarate + O2 = trans-4-hydroxy-L-prolyl-[collagen] + succinate + CO2. Catalyzes the post-translational formation of 4-hydroxyproline in -Xaa-Pro-Gly- sequences in proline-rich peptide sequences of plant glycoproteins and other proteins. Hydroxyprolines are important constituent of many plant cell wall glycoproteins such as extensins, hydroxyproline-rich glycoproteins, lectins and arabinogalactan proteins. In Arabidopsis thaliana (Mouse-ear cress), this protein is Probable prolyl 4-hydroxylase 4.